A 119-amino-acid polypeptide reads, in one-letter code: Large ribosomal subunit protein uL18 (119 aa).

It belongs to the universal ribosomal protein uL18 family. In terms of assembly, part of the 50S ribosomal subunit; part of the 5S rRNA/L5/L18/L25 subcomplex. Contacts the 5S and 23S rRNAs.

In terms of biological role, this is one of the proteins that bind and probably mediate the attachment of the 5S RNA into the large ribosomal subunit, where it forms part of the central protuberance. This Roseobacter denitrificans (strain ATCC 33942 / OCh 114) (Erythrobacter sp. (strain OCh 114)) protein is Large ribosomal subunit protein uL18.